The chain runs to 320 residues: mRNA decay activator protein ZFP36 (320 aa).

Residues Met-1 to His-15 are necessary for nuclear export. The interval Met-1–Thr-93 is necessary and sufficient for the association with mRNA decay enzymes and mRNA decay activation. 2 necessary for localization of ARE-containing mRNAs to processing bodies (PBs) regions span residues Met-1 to Leu-167 and Thr-93 to Glu-320. The interval Leu-17–Arg-50 is disordered. The span at Ser-27–Arg-50 shows a compositional bias: polar residues. Position 53 is a phosphoserine; by MAPKAPK2 (Ser-53). Position 59 is a phosphoserine (Ser-59). The stretch at Pro-64–Gly-68 is one P-P-P-P-G repeat. The segment covering Pro-66–Thr-85 has biased composition (pro residues). Positions Pro-66 to Ser-95 are disordered. Ser-81 and Ser-83 each carry phosphoserine. Thr-85 is modified (phosphothreonine). Position 86 is a phosphoserine (Ser-86). Residues Ser-86 to Ser-95 show a composition bias toward low complexity. The tract at residues Thr-88–Pro-161 is necessary for nuclear localization. The necessary for RNA-binding stretch occupies residues Thr-90 to Ala-166. C3H1-type zinc fingers lie at residues Arg-96 to Gly-124 and Lys-134 to Thr-162. Positions Arg-96–Arg-187 are necessary for interaction with PABPN1. The tract at residues Leu-167–Glu-320 is necessary for mRNA decay activation. Ser-179 carries the post-translational modification Phosphoserine; by MAPKAPK2. The interval Phe-180–Leu-310 is disordered. Ser-190 is subject to Phosphoserine. A P-P-P-P-G repeat occupies Pro-191–Gly-195. Residues Ser-197 to Ser-209 show a composition bias toward low complexity. At Ser-211 the chain carries Phosphoserine. Residues Pro-212–Gly-216 form a P-P-P-P-G repeat. At Ser-221 the chain carries Phosphoserine; by MAPK1; in vitro. Thr-251 is modified (phosphothreonine). Residues Ser-270 and Ser-290 each carry the phosphoserine modification. The span at Ser-280–Ser-290 shows a compositional bias: low complexity. Pro residues predominate over residues Pro-300 to Arg-309. The interaction with CNOT1 stretch occupies residues Pro-306 to Glu-320. A Phosphoserine modification is found at Ser-317.

In terms of assembly, associates with cytoplasmic CCR4-NOT and PAN2-PAN3 deadenylase complexes to trigger ARE-containing mRNA deadenylation and decay processes. Part of a mRNA decay activation complex at least composed of poly(A)-specific exoribonucleases CNOT6, EXOSC2 and XRN1 and mRNA-decapping enzymes DCP1A and DCP2. Associates with the RNA exosome complex. Interacts (via phosphorylated form) with 14-3-3 proteins; these interactions promote exclusion of ZFP36 from cytoplasmic stress granules in response to arsenite treatment in a MAPKAPK2-dependent manner and does not prevent CCR4-NOT deadenylase complex recruitment or ZFP36-induced ARE-containing mRNA deadenylation and decay processes. Interacts with 14-3-3 proteins; these interactions occur in response to rapamycin in an Akt-dependent manner. Interacts with AGO2 and AGO4. Interacts (via C-terminus) with CNOT1; this interaction occurs in a RNA-independent manner and induces mRNA deadenylation. Interacts (via N-terminus) with CNOT6. Interacts with CNOT6L. Interacts (via C-terminus) with CNOT7; this interaction occurs in a RNA-independent manner, induces mRNA deadenylation and is inhibited in a phosphorylation MAPKAPK2-dependent manner. Interacts (via unphosphorylated form) with CNOT8; this interaction occurs in a RNA-independent manner and is inhibited in a phosphorylation MAPKAPK2-dependent manner. Interacts with DCP1A. Interacts (via N-terminus) with DCP2. Interacts with EDC3. Interacts (via N-terminus) with EXOSC2. Interacts with heat shock 70 kDa proteins. Interacts with KHSRP; this interaction increases upon cytokine-induced treatment. Interacts with MAP3K4; this interaction enhances the association with SH3KBP1/CIN85. Interacts with MAPKAPK2; this interaction occurs upon skeletal muscle satellite cell activation. Interacts with NCL. Interacts with NUP214; this interaction increases upon lipopolysaccharide (LPS) stimulation. Interacts with PABPC1; this interaction occurs in a RNA-dependent manner. Interacts (via hypophosphorylated form) with PABPN1 (via RRM domain and C-terminal arginine-rich region); this interaction occurs in the nucleus in a RNA-independent manner, decreases in presence of single-stranded poly(A) RNA-oligomer and in a p38 MAPK-dependent-manner and inhibits nuclear poly(A) tail synthesis. Interacts with PAN2. Interacts (via C3H1-type zinc finger domains) with PKM. Interacts (via C3H1-type zinc finger domains) with nuclear RNA poly(A) polymerase. Interacts with PPP2CA; this interaction occurs in LPS-stimulated cells and induces ZFP36 dephosphorylation, and hence may promote ARE-containing mRNAs decay. Interacts (via C-terminus) with PRR5L (via C-terminus); this interaction may accelerate ZFP36-mediated mRNA decay during stress. Interacts (via C-terminus) with SFN; this interaction occurs in a phosphorylation-dependent manner. Interacts (via extreme C-terminal region) with SH3KBP1/CIN85 (via SH3 domains); this interaction enhances MAP3K4-induced phosphorylation of ZFP36 at Ser-59 and Ser-86 and does not alter neither ZFP36 binding to ARE-containing transcripts nor TNF-alpha mRNA decay. Interacts with XRN1. Interacts (via C-terminus and Ser-179 phosphorylated form) with YWHAB; this interaction occurs in a p38/MAPKAPK2-dependent manner, increases cytoplasmic localization of ZFP36 and protects ZFP36 from Ser-179 dephosphorylation by serine/threonine phosphatase 2A, and hence may be crucial for stabilizing ARE-containing mRNAs. Interacts (via phosphorylated form) with YWHAE. Interacts (via C-terminus) with YWHAG; this interaction occurs in a phosphorylation-dependent manner. Interacts with YWHAH; this interaction occurs in a phosphorylation-dependent manner. Interacts with YWHAQ; this interaction occurs in a phosphorylation-dependent manner. Interacts with (via C-terminus) YWHAZ; this interaction occurs in a phosphorylation-dependent manner. Does not interact with SH3KBP1. Interacts (via P-P-P-P-G repeats) with GIGYF2; the interaction is direct. Post-translationally, phosphorylated. Phosphorylation at serine and/or threonine residues occurs in a p38 MAPK- and MAPKAPK2-dependent manner. Phosphorylated by MAPKAPK2 at Ser-53 and Ser-179; phosphorylation increases its stability and cytoplasmic localization, promotes binding to 14-3-3 adapter proteins and inhibits the recruitment of cytoplasmic CCR4-NOT and PAN2-PAN3 deadenylase complexes to the mRNA decay machinery, thereby inhibiting ZFP36-induced ARE-containing mRNA deadenylation and decay processes. Phosphorylation by MAPKAPK2 does not impair ARE-containing RNA-binding. Phosphorylated in a MAPKAPK2- and p38 MAPK-dependent manner upon skeletal muscle satellite cell activation; this phosphorylation inhibits ZFP36-mediated mRNA decay activity, and hence stabilizes MYOD1 mRNA. Phosphorylated by MAPK1 upon mitogen stimulation. Phosphorylated at Ser-59 and Ser-86; these phosphorylations increase in a SH3KBP1-dependent manner. Phosphorylated at serine and threonine residues in a pyruvate kinase PKM- and p38 MAPK-dependent manner. Phosphorylation at Ser-53 may participate in the PKM-mediated degradation of ZFP36 in a p38 MAPK-dependent manner. Dephosphorylated by serine/threonine phosphatase 2A at Ser-179. In terms of processing, ubiquitinated; pyruvate kinase (PKM)-dependent ubiquitination leads to proteasomal degradation through a p38 MAPK signaling pathway.

The protein resides in the nucleus. It localises to the cytoplasm. It is found in the cytoplasmic granule. The protein localises to the P-body. In terms of biological role, zinc-finger RNA-binding protein that destabilizes numerous cytoplasmic AU-rich element (ARE)-containing mRNA transcripts by promoting their poly(A) tail removal or deadenylation, and hence provide a mechanism for attenuating protein synthesis. Acts as an 3'-untranslated region (UTR) ARE mRNA-binding adapter protein to communicate signaling events to the mRNA decay machinery. Recruits deadenylase CNOT7 (and probably the CCR4-NOT complex) via association with CNOT1, and hence promotes ARE-mediated mRNA deadenylation. Also functions by recruiting components of the cytoplasmic RNA decay machinery to the bound ARE-containing mRNAs. Self regulates by destabilizing its own mRNA. Binds to 3'-UTR ARE of numerous mRNAs. Also binds to ARE of its own mRNA. Plays a role in anti-inflammatory responses; suppresses tumor necrosis factor (TNF)-alpha production by stimulating ARE-mediated TNF-alpha mRNA decay and several other inflammatory ARE-containing mRNAs in interferon (IFN)- and/or lipopolysaccharide (LPS)-induced macrophages. Also plays a role in the regulation of dendritic cell maturation at the post-transcriptional level, and hence operates as part of a negative feedback loop to limit the inflammatory response. Promotes ARE-mediated mRNA decay of hypoxia-inducible factor HIF1A mRNA during the response of endothelial cells to hypoxia. Positively regulates early adipogenesis of preadipocytes by promoting ARE-mediated mRNA decay of immediate early genes (IEGs). Negatively regulates hematopoietic/erythroid cell differentiation by promoting ARE-mediated mRNA decay of the transcription factor STAT5B mRNA. Plays a role in maintaining skeletal muscle satellite cell quiescence by promoting ARE-mediated mRNA decay of the myogenic determination factor MYOD1 mRNA. Also associates with and regulates the expression of non-ARE-containing target mRNAs at the post-transcriptional level, such as MHC class I mRNAs. Participates in association with argonaute RISC catalytic components in the ARE-mediated mRNA decay mechanism; assists microRNA (miRNA) targeting ARE-containing mRNAs. May also play a role in the regulation of cytoplasmic mRNA decapping; enhances decapping of ARE-containing RNAs, in vitro. Involved in the delivery of target ARE-mRNAs to processing bodies (PBs). In addition to its cytosolic mRNA-decay function, affects nuclear pre-mRNA processing. Negatively regulates nuclear poly(A)-binding protein PABPN1-stimulated polyadenylation activity on ARE-containing pre-mRNA during LPS-stimulated macrophages. Also involved in the regulation of stress granule (SG) and P-body (PB) formation and fusion. Plays a role in the regulation of keratinocyte proliferation, differentiation and apoptosis. Plays a role as a tumor suppressor by inhibiting cell proliferation in breast cancer cells. The protein is mRNA decay activator protein ZFP36 of Rattus norvegicus (Rat).